The sequence spans 315 residues: Ribosomal RNA small subunit methyltransferase H (315 aa).

S-adenosyl-L-methionine contacts are provided by residues 35-37 (GGH), aspartate 55, phenylalanine 80, aspartate 102, and glutamine 109.

The protein belongs to the methyltransferase superfamily. RsmH family.

It is found in the cytoplasm. It catalyses the reaction cytidine(1402) in 16S rRNA + S-adenosyl-L-methionine = N(4)-methylcytidine(1402) in 16S rRNA + S-adenosyl-L-homocysteine + H(+). Its function is as follows. Specifically methylates the N4 position of cytidine in position 1402 (C1402) of 16S rRNA. This Buchnera aphidicola subsp. Baizongia pistaciae (strain Bp) protein is Ribosomal RNA small subunit methyltransferase H.